The primary structure comprises 179 residues: Large ribosomal subunit protein uL5 (179 aa).

Belongs to the universal ribosomal protein uL5 family. In terms of assembly, part of the 50S ribosomal subunit; part of the 5S rRNA/L5/L18/L25 subcomplex. Contacts the 5S rRNA and the P site tRNA. Forms a bridge to the 30S subunit in the 70S ribosome.

Functionally, this is one of the proteins that bind and probably mediate the attachment of the 5S RNA into the large ribosomal subunit, where it forms part of the central protuberance. In the 70S ribosome it contacts protein S13 of the 30S subunit (bridge B1b), connecting the 2 subunits; this bridge is implicated in subunit movement. Contacts the P site tRNA; the 5S rRNA and some of its associated proteins might help stabilize positioning of ribosome-bound tRNAs. This is Large ribosomal subunit protein uL5 from Lysinibacillus sphaericus (strain C3-41).